The following is a 413-amino-acid chain: Eukaryotic initiation factor 4A-9 (413 aa).

A Q motif motif is present at residues 40–68 (HSFDAMGLKENLLRGIYAYGFEKPSAIQQ). The Helicase ATP-binding domain maps to 71–241 (IVPFCKGLDV…RKFMNKPVRI (171 aa)). 84–91 (AQSGTGKT) is an ATP binding site. Positions 189–192 (DEAD) match the DEAD box motif. Positions 252-413 (GIKQFYVNVD…ELPANVADLL (162 aa)) constitute a Helicase C-terminal domain.

It belongs to the DEAD box helicase family. eIF4A subfamily. EIF4F is a multi-subunit complex, the composition of which varies with external and internal environmental conditions. It is composed of at least EIF4A, EIF4E and EIF4G.

It catalyses the reaction ATP + H2O = ADP + phosphate + H(+). Its function is as follows. ATP-dependent RNA helicase which is a subunit of the eIF4F complex involved in cap recognition and is required for mRNA binding to ribosome. In the current model of translation initiation, eIF4A unwinds RNA secondary structures in the 5'-UTR of mRNAs which is necessary to allow efficient binding of the small ribosomal subunit, and subsequent scanning for the initiator codon. This is Eukaryotic initiation factor 4A-9 from Nicotiana tabacum (Common tobacco).